A 307-amino-acid polypeptide reads, in one-letter code: 3-methyl-2-oxobutanoate hydroxymethyltransferase (307 aa).

Mg(2+)-binding residues include Asp61 and Asp100. 3-methyl-2-oxobutanoate-binding positions include Asp61 to Ser62, Asp100, and Lys130. Glu132 is a Mg(2+) binding site. Residue Glu199 is the Proton acceptor of the active site.

It belongs to the PanB family. Homodecamer; pentamer of dimers. It depends on Mg(2+) as a cofactor.

Its subcellular location is the cytoplasm. The enzyme catalyses 3-methyl-2-oxobutanoate + (6R)-5,10-methylene-5,6,7,8-tetrahydrofolate + H2O = 2-dehydropantoate + (6S)-5,6,7,8-tetrahydrofolate. It participates in cofactor biosynthesis; (R)-pantothenate biosynthesis; (R)-pantoate from 3-methyl-2-oxobutanoate: step 1/2. Functionally, catalyzes the reversible reaction in which hydroxymethyl group from 5,10-methylenetetrahydrofolate is transferred onto alpha-ketoisovalerate to form ketopantoate. The polypeptide is 3-methyl-2-oxobutanoate hydroxymethyltransferase (Nitratidesulfovibrio vulgaris (strain ATCC 29579 / DSM 644 / CCUG 34227 / NCIMB 8303 / VKM B-1760 / Hildenborough) (Desulfovibrio vulgaris)).